The sequence spans 698 residues: SHC SH2 domain-binding protein 1 homolog B (698 aa).

PbH1 repeat units lie at residues Cys-480 to Pro-502, Gly-503 to Asp-524, and Ile-532 to Lys-554.

The protein resides in the midbody. The protein localises to the cytoplasm. Its subcellular location is the cytoskeleton. It localises to the spindle. May play a role in signaling pathways governing cellular proliferation. The protein is SHC SH2 domain-binding protein 1 homolog B (shcbp1-b) of Xenopus laevis (African clawed frog).